Reading from the N-terminus, the 354-residue chain is Cysteine proteinase 1 (354 aa).

Residues 1-24 form the signal peptide; that stretch reads MARRNPLLFAIVVTILFVVCYGSA. Positions 25–125 are cleaved as a propeptide — activation peptide; it reads LIAQTPPPVD…HKEDVHVDDS (101 aa). Disulfide bonds link C150–C191, C184–C229, and C282–C330. C153 is a catalytic residue. A glycan (N-linked (GlcNAc...) asparagine) is linked at N208. Active-site residues include H289 and N309.

Belongs to the peptidase C1 family.

Functionally, the cysteine proteinases have a potential role in host-parasite interaction and virulence. The sequence is that of Cysteine proteinase 1 (CYS1) from Leishmania pifanoi.